We begin with the raw amino-acid sequence, 375 residues long: UDP-N-acetylglucosamine--N-acetylmuramyl-(pentapeptide) pyrophosphoryl-undecaprenol N-acetylglucosamine transferase (375 aa).

UDP-N-acetyl-alpha-D-glucosamine is bound by residues 15–17, Asn126, Arg169, Ser197, and Gln298; that span reads TGG.

The protein belongs to the glycosyltransferase 28 family. MurG subfamily.

It is found in the cell inner membrane. The catalysed reaction is di-trans,octa-cis-undecaprenyl diphospho-N-acetyl-alpha-D-muramoyl-L-alanyl-D-glutamyl-meso-2,6-diaminopimeloyl-D-alanyl-D-alanine + UDP-N-acetyl-alpha-D-glucosamine = di-trans,octa-cis-undecaprenyl diphospho-[N-acetyl-alpha-D-glucosaminyl-(1-&gt;4)]-N-acetyl-alpha-D-muramoyl-L-alanyl-D-glutamyl-meso-2,6-diaminopimeloyl-D-alanyl-D-alanine + UDP + H(+). It functions in the pathway cell wall biogenesis; peptidoglycan biosynthesis. In terms of biological role, cell wall formation. Catalyzes the transfer of a GlcNAc subunit on undecaprenyl-pyrophosphoryl-MurNAc-pentapeptide (lipid intermediate I) to form undecaprenyl-pyrophosphoryl-MurNAc-(pentapeptide)GlcNAc (lipid intermediate II). The sequence is that of UDP-N-acetylglucosamine--N-acetylmuramyl-(pentapeptide) pyrophosphoryl-undecaprenol N-acetylglucosamine transferase from Rhodopseudomonas palustris (strain BisB18).